A 102-amino-acid chain; its full sequence is Integration host factor subunit beta (102 aa).

This sequence belongs to the bacterial histone-like protein family. In terms of assembly, heterodimer of an alpha and a beta chain.

Its function is as follows. This protein is one of the two subunits of integration host factor, a specific DNA-binding protein that functions in genetic recombination as well as in transcriptional and translational control. This is Integration host factor subunit beta (ihfB) from Rhizobium radiobacter (Agrobacterium tumefaciens).